A 495-amino-acid chain; its full sequence is Nuclear receptor subfamily 6 group A member 1 (495 aa).

Positions 1 to 34 (MERDERPPSGGGGGGGSAGFLEPPAALPPPPRNG) are disordered. The span at 9 to 18 (SGGGGGGGSA) shows a compositional bias: gly residues. Positions 72–147 (QRTCLICGDR…MGMNRKAIRE (76 aa)) form a DNA-binding region, nuclear receptor. Residues Cys75, Cys78, Cys92, Cys95, Cys111, Cys117, Cys127, and Cys130 each contribute to the Zn(2+) site. NR C4-type zinc fingers lie at residues 75–95 (CLIC…CEGC) and 111–135 (CSRD…LLKC). 2 disordered regions span residues 145–165 (IRED…QISE) and 177–214 (FEEE…LSSS). The span at 180–192 (EANHWSNHGDSDH) shows a compositional bias: basic and acidic residues. The sufficient for interaction with UIMC1 stretch occupies residues 187-268 (HGDSDHSSPG…RSLDPQSYSL (82 aa)). Positions 202 to 214 (SNQPSPGSTLSSS) are enriched in low complexity. An NR LBD domain is found at 264-495 (QSYSLIHQLM…HSCKTSTVKE (232 aa)).

This sequence belongs to the nuclear hormone receptor family. NR6 subfamily. Homodimer. Interacts with UIMC1. As to expression, expressed in the germ cells of both the adult testis and ovary, being most abundant in spermatids.

Its subcellular location is the nucleus. Its function is as follows. Orphan nuclear receptor that binds to a response element containing the sequence 5'-TCAAGGTCA-3'. Acts as a regulator of embryonic stem cell pluripotency by mediating repression of POU5F1/OCT4: binds to the DR0 element within the POU5F1/OCT4 promoter and inhibits POU5F1/OCT4 expression during embryonic stem cell differentiation. Required to restrict POU5F1/OCT4 expression to the germ cell lineage. Involved in the regulation of gene expression in germ cell development during gametogenesis. The protein is Nuclear receptor subfamily 6 group A member 1 (Nr6a1) of Mus musculus (Mouse).